The chain runs to 425 residues: GTPase Obg (425 aa).

An Obg domain is found at 1-158 (MFVDVARIYV…RWLLLELKVV (158 aa)). Residues 159–330 (ADVGLVGFPN…LLEAAYDLIR (172 aa)) form the OBG-type G domain. Residues 165 to 172 (GFPNAGKS), 190 to 194 (FTTLT), 212 to 215 (DIPG), 282 to 285 (NKMD), and 311 to 313 (SGA) contribute to the GTP site. Mg(2+)-binding residues include S172 and T192. The 78-residue stretch at 345–422 (VYRPKEEGWR…VCDIEFELMA (78 aa)) folds into the OCT domain.

It belongs to the TRAFAC class OBG-HflX-like GTPase superfamily. OBG GTPase family. As to quaternary structure, monomer. Mg(2+) serves as cofactor.

Its subcellular location is the cytoplasm. Functionally, an essential GTPase which binds GTP, GDP and possibly (p)ppGpp with moderate affinity, with high nucleotide exchange rates and a fairly low GTP hydrolysis rate. Plays a role in control of the cell cycle, stress response, ribosome biogenesis and in those bacteria that undergo differentiation, in morphogenesis control. This is GTPase Obg from Symbiobacterium thermophilum (strain DSM 24528 / JCM 14929 / IAM 14863 / T).